Here is a 593-residue protein sequence, read N- to C-terminus: MSQTNYIPSTPNKSTPPSELSSTPIDENDIGLLVSLNQEISSNIHVKIKIEENITIGRSKTCNIVVPELIVSGKHCIITRADAIENGNTNYGLLMIQDQSTNGTFINGKLIGKGKSRLLKNGDKLCLGKSTKEIDISFLYKSNYSNQLLLSSSTNNLNNSGTAQYIWERKDIKDDILKDYDFIKELGSGNFSVVYEGVNKNTGKRVAIKHLNLSKINTHTPKFKSQLNREIEILKFINHENVVEIYDIFYTKDQQLFFILELANGGELYNKIGFNEPLLNENQSKFIFKQILNAVSYLHSKGIAHRDLKPENILFDSYGDDYLKIKITDFGLARFIHEGELAKTLCGSPLYVAPEVILSLHHKNKYGTNSSSSSQSPTKDINSVGYGKSCDAWSLGAILYIVLCGTPPFDDDDDEEMSTPQLFEKIVSGNYRVEKLEKSLISSSAADLVKGLLTVDPDKRLTVEQALNHPWITEINNNSNNNNNNINNNSSNINIIKKSPLKTVNTNNNNNNCKLSSPIKNSSKLKRNLSNEPLNNNISNNNNTQTSFTGSLLNQLQLNEGELLKKRKTFLSNNDQKENINPVINNPFLKSSQ.

The disordered stretch occupies residues 1–24 (MSQTNYIPSTPNKSTPPSELSSTP). The FHA domain maps to 54 to 111 (ITIGRSKTCNIVVPELIVSGKHCIITRADAIENGNTNYGLLMIQDQSTNGTFINGKLI). One can recognise a Protein kinase domain in the interval 180 to 472 (YDFIKELGSG…VEQALNHPWI (293 aa)). ATP-binding positions include 186-194 (LGSGNFSVV) and lysine 209. The active-site Proton acceptor is the aspartate 307.

Belongs to the protein kinase superfamily. CAMK Ser/Thr protein kinase family. CHK2 subfamily.

The enzyme catalyses L-seryl-[protein] + ATP = O-phospho-L-seryl-[protein] + ADP + H(+). It catalyses the reaction L-threonyl-[protein] + ATP = O-phospho-L-threonyl-[protein] + ADP + H(+). This Dictyostelium discoideum (Social amoeba) protein is Probable serine/threonine-protein kinase fhkA (fhkA).